A 1220-amino-acid chain; its full sequence is Diacylglycerol kinase delta (1220 aa).

Residues 1–47 (MAAAAGAPPPGPPQPPPPPPPEESSDSEPEAEPGSPQKLIRKVSTSG) are disordered. The regulates association with membranes stretch occupies residues 1–52 (MAAAAGAPPPGPPQPPPPPPPEESSDSEPEAEPGSPQKLIRKVSTSGQIRQK). Pro residues predominate over residues 7-22 (APPPGPPQPPPPPPPE). One can recognise a PH domain in the interval 53 to 146 (TILKEGMLTK…WIAALKTVQN (94 aa)). Phorbol-ester/DAG-type zinc fingers lie at residues 163–213 (MHNW…TSNC) and 235–286 (PHQW…VMKC). The DAGKc domain occupies 317 to 451 (SCTSPLLVFV…MLDRWSVMAY (135 aa)). Residues 554–584 (DDESQASSSLSNPPPTIAEEAEDGDGSGNIC) form a disordered region. In terms of domain architecture, SAM spans 1151-1214 (WGTEEVAAWL…LCGIKELSRS (64 aa)).

Belongs to the eukaryotic diacylglycerol kinase family. As to quaternary structure, homooligomer. Monomer. Interacts with AP2A2; regulates clathrin-dependent endocytosis. As to expression, widely expressed.

It is found in the cell membrane. The protein resides in the membrane. It localises to the clathrin-coated pit. Its subcellular location is the cytoplasm. The catalysed reaction is a 1,2-diacyl-sn-glycerol + ATP = a 1,2-diacyl-sn-glycero-3-phosphate + ADP + H(+). It carries out the reaction 1,2-di-(9Z-octadecenoyl)-sn-glycerol + ATP = 1,2-di-(9Z-octadecenoyl)-sn-glycero-3-phosphate + ADP + H(+). It catalyses the reaction 1-octadecanoyl-2-(5Z,8Z,11Z,14Z-eicosatetraenoyl)-sn-glycerol + ATP = 1-octadecanoyl-2-(5Z,8Z,11Z,14Z-eicosatetraenoyl)-sn-glycero-3-phosphate + ADP + H(+). It functions in the pathway lipid metabolism; glycerolipid metabolism. Its function is as follows. Diacylglycerol kinase that converts diacylglycerol/DAG into phosphatidic acid/phosphatidate/PA and regulates the respective levels of these two bioactive lipids. Thereby, acts as a central switch between the signaling pathways activated by these second messengers with different cellular targets and opposite effects in numerous biological processes. By controlling the levels of diacylglycerol, regulates for instance the PKC and EGF receptor signaling pathways and plays a crucial role during development. May also regulate clathrin-dependent endocytosis. This Mus musculus (Mouse) protein is Diacylglycerol kinase delta.